A 274-amino-acid chain; its full sequence is 16S rRNA (guanine(1405)-N(7))-methyltransferase (274 aa).

Residues phenylalanine 64, 102–104, arginine 108, alanine 133, aspartate 156, 182–183, leucine 198, and glutamine 207 each bind S-adenosyl-L-methionine; these read HMS and DL.

This sequence belongs to the methyltransferase superfamily. Aminoglycoside resistance family.

It catalyses the reaction guanosine(1405) in 16S rRNA + S-adenosyl-L-methionine = N(7)-methylguanosine(1405) in 16S rRNA + S-adenosyl-L-homocysteine. In terms of biological role, specifically methylates the N(7) position of guanine 1405 in 16S rRNA. Confers resistance to aminoglycosides. The chain is 16S rRNA (guanine(1405)-N(7))-methyltransferase (grm) from Micromonospora rosea.